The chain runs to 803 residues: Pesticidal crystal protein Cry13Aa (803 aa).

It belongs to the delta endotoxin family.

Functionally, endotoxin with nematicidal activity. This Bacillus thuringiensis protein is Pesticidal crystal protein Cry13Aa (cry13Aa).